The chain runs to 1501 residues: 1-phosphatidylinositol 4,5-bisphosphate phosphodiesterase eta-2 (1501 aa).

Residues 28 to 47 (RGFSGLQGGRRRGRGEKGIP) are disordered. Residues 75-229 (MPGPQPSAAS…WVTGLRYLMA (155 aa)) form a necessary for plasma membrane localization region. The PH domain occupies 121 to 229 (SAMQEGTQMV…WVTGLRYLMA (109 aa)). EF-hand domains are found at residues 243-278 (TRDQ…LNVN) and 279-315 (LPRQ…MSTR). 5 residues coordinate Ca(2+): Asp256, Asn258, Asp260, Ser262, and Glu267. One can recognise a PI-PLC X-box domain in the interval 400–545 (QDMTQPLSHY…LKGKILVKGK (146 aa)). His415 is a catalytic residue. Positions 416, 445, and 447 each coordinate Ca(2+). The active site involves His459. Glu494 is a Ca(2+) binding site. The substrate site is built by Lys543 and Lys545. 2 disordered regions span residues 551 to 570 (ISED…DEME) and 609 to 700 (DPND…QKKT). Residues 553–570 (EDAEEGEVSDEDSADEME) are compositionally biased toward acidic residues. A phosphoserine mark is found at Ser561 and Ser565. Residues 626 to 638 (RKAEAKKGQSKVE) show a composition bias toward basic and acidic residues. A compositionally biased stretch (basic residues) spans 662–673 (SKRKKKGSKIKK). 2 positions are modified to phosphoserine: Ser676 and Ser686. Positions 707–821 (LSDLVKYTKS…GYVLKPQCMC (115 aa)) constitute a PI-PLC Y-box domain. Substrate contacts are provided by Ser734 and Arg761. Residues 821–950 (CQGVFNPNSE…PGYRHVYLEG (130 aa)) form the C2 domain. 6 residues coordinate Ca(2+): Ile865, Asp867, Asp891, Asp920, His921, and Asp922. Disordered stretches follow at residues 986 to 1073 (GSLD…RLFP), 1089 to 1238 (EEPA…SSND), 1273 to 1305 (SAAR…DELQ), and 1398 to 1469 (GDIT…GACS). The span at 1089–1107 (EEPALGPGLPLQAAAPTGP) shows a compositional bias: low complexity. 2 stretches are compositionally biased toward basic and acidic residues: residues 1142–1151 (GGRENEEPPL) and 1215–1227 (LWQR…HRDS). Low complexity predominate over residues 1421-1439 (RRSSSRSQSRVRAIASRAR). A compositionally biased stretch (basic and acidic residues) spans 1440–1463 (QAQERQQRLRGQDSRGPPEEERGT).

The cofactor is Ca(2+). In terms of tissue distribution, specifically detected in the brain, with higher level in cerebral cortex, olfactory bulb and hippocampus (at protein level). Expressed in the pyramidal cells of the hippocampus, but also in eye and lung.

It localises to the cytoplasm. The protein localises to the cell membrane. It catalyses the reaction a 1,2-diacyl-sn-glycero-3-phospho-(1D-myo-inositol-4,5-bisphosphate) + H2O = 1D-myo-inositol 1,4,5-trisphosphate + a 1,2-diacyl-sn-glycerol + H(+). Activity is stimulated by GNB1:GNG2. Functionally, the production of the second messenger molecules diacylglycerol (DAG) and inositol 1,4,5-trisphosphate (IP3) is mediated by activated phosphatidylinositol-specific phospholipase C enzymes. This phospholipase activity is very sensitive to calcium. May be important for formation and maintenance of the neuronal network in the postnatal brain. In Mus musculus (Mouse), this protein is 1-phosphatidylinositol 4,5-bisphosphate phosphodiesterase eta-2.